Reading from the N-terminus, the 127-residue chain is DNA-directed RNA polymerase subunit omega (127 aa).

It belongs to the RNA polymerase subunit omega family. The RNAP catalytic core consists of 2 alpha, 1 beta, 1 beta' and 1 omega subunit. When a sigma factor is associated with the core the holoenzyme is formed, which can initiate transcription.

It carries out the reaction RNA(n) + a ribonucleoside 5'-triphosphate = RNA(n+1) + diphosphate. In terms of biological role, promotes RNA polymerase assembly. Latches the N- and C-terminal regions of the beta' subunit thereby facilitating its interaction with the beta and alpha subunits. This chain is DNA-directed RNA polymerase subunit omega, found in Rickettsia peacockii (strain Rustic).